The following is a 613-amino-acid chain: Protein CER1-like 2 (613 aa).

The next 6 membrane-spanning stretches (helical) occupy residues 13-33 (WTPLGSFKYLLLAPLVFDSIY), 44-64 (LLIVAVTVWRIVHSQIWISLS), 95-115 (IIFNTLIVYLTKVYVSGTSTI), 122-142 (GVILVALLHAGPVEFIYYWFH), 182-202 (LILGLPLITTFMCGTVSVVSI), and 322-342 (YLFLMKPFALILSFILRSFSF). Residues 134–268 (VEFIYYWFHR…MPMYDYIYGT (135 aa)) enclose the Fatty acid hydroxylase domain.

The protein belongs to the sterol desaturase family. Not detected in any tissues.

It localises to the membrane. This is Protein CER1-like 2 from Arabidopsis thaliana (Mouse-ear cress).